Reading from the N-terminus, the 578-residue chain is NADPH oxidase 4 (578 aa).

At 1–16 (MAVSWRSWLANEGVKH) the chain is on the cytoplasmic side. Residues 17–37 (LCLLIWLSLNVLLFWKTFLLY) traverse the membrane as a helical segment. Topologically, residues 38–62 (NQGPEYYYIHQMLGLGLCLSRASAS) are extracellular. Residues 58 to 303 (RASASVLNLN…YCAERLYRCI (246 aa)) enclose the Ferric oxidoreductase domain. Residues 63–83 (VLNLNCSLILLPMCRTVLAYL) form a helical membrane-spanning segment. Residues 84–104 (RGSQKVPSRRTRRLLDKSKTL) lie on the Cytoplasmic side of the membrane. The helical transmembrane segment at 105–125 (HITCGVTICIFSGVHVAAHLV) threads the bilayer. Over 126–154 (NALNFSVNYSEDFLELNAARYQNEDPRKL) the chain is Extracellular. An N-linked (GlcNAc...) asparagine glycan is attached at Asn-133. Residues 155 to 175 (LFTTIPGLTGVCMVVVLFLMV) traverse the membrane as a helical segment. At 176-188 (TASTYAIRVSNYD) the chain is on the cytoplasmic side. A helical membrane pass occupies residues 189–209 (IFWYTHNLFFVFYMLLLLHVS). Residues 210 to 424 (GGLLKYQTNV…SPFEESLNYE (215 aa)) are Extracellular-facing. An E-loop; essential for H2O2 generating catalytic activity region spans residues 218–273 (NVDTHPPGCISLNQTSSQNMSIPDYVSEHFHGSLPRGFSKLEDRYQKTLVKICLEE). A glycan (N-linked (GlcNAc...) asparagine) is linked at Asn-230. The tract at residues 248 to 575 (HGSLPRGFSK…YGTKFEYNKE (328 aa)) is mediates interaction with TLR4. The region spanning 304–419 (RSNKPVTIIS…DGPFGSPFEE (116 aa)) is the FAD-binding FR-type domain. The chain crosses the membrane as a helical span at residues 425 to 445 (VSLCVAGGIGVTPFASILNTL). The Cytoplasmic segment spans residues 446–578 (LDDWKPYKLR…KFEYNKESFS (133 aa)).

Interacts with, relocalizes and stabilizes CYBA/p22phox. Interacts with TLR4. Interacts with protein disulfide isomerase. Interacts with PPP1R15A. Interacts with LRRC8A; this interaction prevents the ubiquitin-mediated degradation of LRRC8A. Heme serves as cofactor. N-glycosylation is required for the function. EXpressed in brain, in all layers of the cerebellum, in pyramidal cells of the Ammon horn and in Purkinje cells (at protein level). Expressed in osteoclasts, leukocytes, kidney, liver and lung.

It localises to the cytoplasm. The protein localises to the endoplasmic reticulum membrane. Its subcellular location is the cell membrane. The protein resides in the cell junction. It is found in the focal adhesion. It localises to the nucleus. It carries out the reaction NADPH + 2 O2 = 2 superoxide + NADP(+) + H(+). It catalyses the reaction NADPH + O2 + H(+) = H2O2 + NADP(+). Its activity is regulated as follows. Activated by insulin. Inhibited by diphenylene iodonium. Inhibited by plumbagin. Activated by phorbol 12-myristate 13-acetate (PMA). Functionally, NADPH oxidase that catalyzes predominantly the reduction of oxygen to H2O2. Can also catalyze to a smaller extent, the reduction of oxygen to superoxide. May function as an oxygen sensor regulating the KCNK3/TASK-1 potassium channel and HIF1A activity. May regulate insulin signaling cascade. May play a role in apoptosis, bone resorption and lipolysaccharide-mediated activation of NFKB. May produce superoxide in the nucleus and play a role in regulating gene expression upon cell stimulation. Promotes ferroptosis, reactive oxygen species production and reduced glutathione (GSH) levels by activating NLRP3 inflammasome activation and cytokine release. This is NADPH oxidase 4 (Nox4) from Mus musculus (Mouse).